A 591-amino-acid polypeptide reads, in one-letter code: Glutathione hydrolase (591 aa).

The first 41 residues, 1–41, serve as a signal peptide directing secretion; that stretch reads MASKWIEEQPLVHRRDIRISSKSRIAAGLLVLLVLWRYGLP. An L-glutamate-binding site is contributed by Arg-122. N-linked (GlcNAc...) asparagine glycans are attached at residues Asn-135, Asn-270, and Asn-389. Residue Thr-393 is the Nucleophile of the active site. L-glutamate contacts are provided by residues Thr-411, Glu-432, and 464 to 465; that span reads SA. N-linked (GlcNAc...) asparagine glycosylation is present at Asn-534.

Belongs to the gamma-glutamyltransferase family.

It carries out the reaction an N-terminal (5-L-glutamyl)-[peptide] + an alpha-amino acid = 5-L-glutamyl amino acid + an N-terminal L-alpha-aminoacyl-[peptide]. The enzyme catalyses glutathione + H2O = L-cysteinylglycine + L-glutamate. It catalyses the reaction an S-substituted glutathione + H2O = an S-substituted L-cysteinylglycine + L-glutamate. Its pathway is mycotoxin biosynthesis. In terms of biological role, gamma-glutamyltransferase; part of the gene cluster that mediates the biosynthesis of the secondary metabolite ustiloxin B, an antimitotic tetrapeptide. First, ustA is processed by the subtilisin-like endoprotease Kex2 that is outside the ustiloxin B gene cluster, at the C-terminal side of Arg-Lys, after transfer to Golgi apparatus through the endoplasmic reticulum (ER). Cleavage by KEX2 generates 16 peptides YAIG-I to YAIG-XVI. To process the precursor peptide further, at least two peptidases are necessary to cleave the N-terminal and C-terminal sides of the Tyr-Ala-Ile-Gly core peptide which serves as backbone for the synthesis of ustiloxin B, through cyclization and modification of the tyrosine with a non-protein coding amino acid, norvaline. One of the two peptidases must be the serine peptidase ustP; and the other pepdidase is probably ustH. Macrocyclization of the core peptide derived from ustA requires the tyrosinase ustQ, as well as the homologous oxidases ustYa and ustYb, and leads to the production of the first cyclization product N-desmethylustiloxin F. For the formation of N-desmethylustiloxin F, three oxidation steps are required, hydroxylation at the benzylic position, hydroxylation at either the aromatic ring of Tyr or beta-position of Ile, and oxidative cyclization. UstQ may catalyze the oxidation of a phenol moiety, whereas the ustYa and ustYb are most likely responsible for the remaining two-step oxidations. N-desmethylustiloxin F is then methylated by ustM to yield ustiloxin F which in turn substrate of the cytochrome P450 monooxygenase ustC which catalyzes the formation of S-deoxyustiloxin H. The flavoprotein monooxygenases ustF1 and ustF2 then participate in the modification of the side chain of S-deoxyustiloxin H, leading to the synthesis of an oxime intermediate, via ustiloxin H. Finally, carboxylative dehydration performed by the cysteine desulfurase-like protein ustD yields ustiloxin B. The polypeptide is Glutathione hydrolase (Aspergillus flavus (strain ATCC 200026 / FGSC A1120 / IAM 13836 / NRRL 3357 / JCM 12722 / SRRC 167)).